A 123-amino-acid chain; its full sequence is Defensin beta 118 (123 aa).

Positions 1 to 19 (MKLLLLALPMLVLLPQVIP) are cleaved as a signal peptide. 3 cysteine pairs are disulfide-bonded: C27–C54, C34–C48, and C38–C55. The propeptide occupies 65–123 (VPTTSPTPLSDSTPGIIDDILTVRFTTDYFEVSSKKDMIEESEAGRGTETSLPNVHHSS). Residues 100-110 (KDMIEESEAGR) are compositionally biased toward basic and acidic residues. A disordered region spans residues 100–123 (KDMIEESEAGRGTETSLPNVHHSS). Positions 112 to 123 (TETSLPNVHHSS) are enriched in polar residues.

This sequence belongs to the beta-defensin family. In terms of processing, the three-dimensional structure formed by the three intramolecular disulfide bridges is indispensable for antimicrobial activity.

The protein resides in the secreted. Functionally, host defense peptide that exhibits antimicrobial activity against both Gram-negative bacteria, such as E.coli and S.typhimurium, and Gram-positive bacteria, such as S.aureus and B.subtilis. Inhibits cell adhesion of E.coli on intestinal epithelial enterocytes. Causes rapid permeabilization of both the outer and inner membrane of E.coli, leading to morphological alterations on the bacterial surface. Binds to bacterial lipopolysaccharides (LPS) with high affinity, and may thereby be involved in immunoregulation through LPS neutralization. May contribute to epididymal innate immunity and protect the sperm against attack by microorganisms. This chain is Defensin beta 118 (DEFB118), found in Gorilla gorilla gorilla (Western lowland gorilla).